A 431-amino-acid polypeptide reads, in one-letter code: Trigger factor (431 aa).

The region spanning Gly-163–Pro-248 is the PPIase FKBP-type domain.

This sequence belongs to the FKBP-type PPIase family. Tig subfamily.

Its subcellular location is the cytoplasm. It carries out the reaction [protein]-peptidylproline (omega=180) = [protein]-peptidylproline (omega=0). In terms of biological role, involved in protein export. Acts as a chaperone by maintaining the newly synthesized protein in an open conformation. Functions as a peptidyl-prolyl cis-trans isomerase. The polypeptide is Trigger factor (Geobacter sulfurreducens (strain ATCC 51573 / DSM 12127 / PCA)).